The chain runs to 237 residues: MKPKISFNNVVMRYGGFLALDRLNLDIADGEFVTVVGPSGCGKSTAMNIADGLLQPSGGGILVGDKPVTGPGPERGVIFQQYALFPWLTVRQNVEFGLTDFADALPKALSGGMKQRCAIARAYAAAPEILLMDEPFGALDALTRVHMQDQLLDAWSRERRTVMFITHDVDEAVYLANRVIVMAARPGRLDQIIPVDLPYPRTEAIRLSPEFAAIRNRVWHAVYHQQPQTDQQSSHGQ.

Residues Ile5–Ile205 form the ABC transporter domain. Gly37–Ser44 serves as a coordination point for ATP.

It belongs to the ABC transporter superfamily. The complex is composed of two ATP-binding proteins (BMEII0108), two transmembrane proteins (BMEII0107) and a solute-binding protein (BMEII0109).

The protein localises to the cell inner membrane. Functionally, probably part of an ABC transporter complex. Probably Responsible for energy coupling to the transport system. The protein is Putative ATP-binding protein BMEII0108 of Brucella melitensis biotype 1 (strain ATCC 23456 / CCUG 17765 / NCTC 10094 / 16M).